A 227-amino-acid polypeptide reads, in one-letter code: Probable N-acetyltransferase family 8 member 5 (227 aa).

The next 3 helical transmembrane spans lie at Ile29–Met49, Ile53–Leu73, and Ile201–Ser221. Residues Phe69–Ile213 enclose the N-acetyltransferase domain.

It belongs to the camello family.

It is found in the membrane. In terms of biological role, may play a role in regulation of gastrulation. This is Probable N-acetyltransferase family 8 member 5 from Mus musculus (Mouse).